Consider the following 131-residue polypeptide: Transcription antitermination protein NusB (131 aa).

This sequence belongs to the NusB family.

Its function is as follows. Involved in transcription antitermination. Required for transcription of ribosomal RNA (rRNA) genes. Binds specifically to the boxA antiterminator sequence of the ribosomal RNA (rrn) operons. This chain is Transcription antitermination protein NusB, found in Campylobacter fetus subsp. fetus (strain 82-40).